The following is a 790-amino-acid chain: Exocyst complex component SEC15A (790 aa).

Residues 49 to 70 adopt a coiled-coil conformation; it reads LVHQLKNVARKKEAEIEDLCKT.

Belongs to the SEC15 family. As to quaternary structure, the exocyst complex is composed of SEC3, SEC5, SEC6, SEC8, SEC10, EXO70A1 and EXO84B.

The protein resides in the cytoplasm. Its subcellular location is the cytosol. Component of the exocyst complex involved in the docking of exocytic vesicles with fusion sites on the plasma membrane during regulated or polarized secretion. Involved in polarized cell growth and organ morphogenesis. During cytokinesis, involved in cell plate initiation, cell plate maturation and formation of new primary cell wall. The polypeptide is Exocyst complex component SEC15A (SEC15A) (Arabidopsis thaliana (Mouse-ear cress)).